A 280-amino-acid polypeptide reads, in one-letter code: Pantothenate synthetase (280 aa).

31 to 38 (MGNLHVGH) serves as a coordination point for ATP. Residue histidine 38 is the Proton donor of the active site. Glutamine 62 provides a ligand contact to (R)-pantoate. Residue glutamine 62 participates in beta-alanine binding. 150–153 (GKKD) contacts ATP. A (R)-pantoate-binding site is contributed by glutamine 156. Residues valine 179 and 187–190 (MSSR) contribute to the ATP site.

Belongs to the pantothenate synthetase family. In terms of assembly, homodimer.

The protein localises to the cytoplasm. The enzyme catalyses (R)-pantoate + beta-alanine + ATP = (R)-pantothenate + AMP + diphosphate + H(+). It functions in the pathway cofactor biosynthesis; (R)-pantothenate biosynthesis; (R)-pantothenate from (R)-pantoate and beta-alanine: step 1/1. In terms of biological role, catalyzes the condensation of pantoate with beta-alanine in an ATP-dependent reaction via a pantoyl-adenylate intermediate. The chain is Pantothenate synthetase from Xanthomonas oryzae pv. oryzae (strain KACC10331 / KXO85).